The chain runs to 461 residues: Protein ultraspiracle homolog (461 aa).

Residues 1–112 (MSSVAKKDKR…NHPLSGSKHL (112 aa)) form a modulating region. The interval 26-51 (PAPHQQQSMPSSQPSNFLQPLATPST) is disordered. Residues 27 to 40 (APHQQQSMPSSQPS) are compositionally biased toward low complexity. Positions 41 to 51 (NFLQPLATPST) are enriched in polar residues. 2 NR C4-type zinc fingers span residues 113 to 133 (CSICGDRASGKHYGVYSCEGC) and 149 to 173 (CREDRNCIIDKRQRNRCQYCRYQKC). Residues 113-185 (CSICGDRASG…CGMKREAVQE (73 aa)) constitute a DNA-binding region (nuclear receptor). The hinge stretch occupies residues 185-192 (EERQRAAR). The 250-residue stretch at 203 to 452 (VQELSIERLL…SYIHDALRNH (250 aa)) folds into the NR LBD domain.

Belongs to the nuclear hormone receptor family. NR2 subfamily. Heterodimer of USP and ECR. Only the heterodimer is capable of high-affinity binding to ecdysone.

Its subcellular location is the nucleus. In terms of biological role, receptor for ecdysone. May be an important modulator of insect metamorphosis. In Manduca sexta (Tobacco hawkmoth), this protein is Protein ultraspiracle homolog (USP).